A 382-amino-acid polypeptide reads, in one-letter code: Chaperone protein DnaJ (382 aa).

The 66-residue stretch at 5-70 (DYYETLGVSR…NKRAAYDRYG (66 aa)) folds into the J domain. The CR-type zinc-finger motif lies at 140-218 (GKTAQIRVPT…CHGQGRITEE (79 aa)). Residues C153, C156, C170, C173, C192, C195, C206, and C209 each contribute to the Zn(2+) site. CXXCXGXG motif repeat units follow at residues 153-160 (CDVCSGSG), 170-177 (CGTCQGSG), 192-199 (CPTCHGRG), and 206-213 (CGKCHGQG).

This sequence belongs to the DnaJ family. In terms of assembly, homodimer. The cofactor is Zn(2+).

The protein localises to the cytoplasm. Its function is as follows. Participates actively in the response to hyperosmotic and heat shock by preventing the aggregation of stress-denatured proteins and by disaggregating proteins, also in an autonomous, DnaK-independent fashion. Unfolded proteins bind initially to DnaJ; upon interaction with the DnaJ-bound protein, DnaK hydrolyzes its bound ATP, resulting in the formation of a stable complex. GrpE releases ADP from DnaK; ATP binding to DnaK triggers the release of the substrate protein, thus completing the reaction cycle. Several rounds of ATP-dependent interactions between DnaJ, DnaK and GrpE are required for fully efficient folding. Also involved, together with DnaK and GrpE, in the DNA replication of plasmids through activation of initiation proteins. The polypeptide is Chaperone protein DnaJ (Rhizobium rhizogenes (strain K84 / ATCC BAA-868) (Agrobacterium radiobacter)).